The chain runs to 241 residues: MKHVLVIDDDVAMRHLIVEYLTIHAFKVTAVADSKQFNRVLSSETVDVAVVDLNLGREDGLEIVRTLATKSDVPMIIISGDRLEEADKVVALELGATDFIAKPFGTREFLARIRVALRERPSVARTKDRRSFYFADWTLNIRQRRLISEEGGEIKLTAGEFNLLVAFLEKPRDVLSREQLLIASRVREEEVYDRSIDVLIFRLRRKLEGDPTSPQLIKTARGAGYFFDADVNVSYGGMMAA.

A Response regulatory domain is found at 3 to 117; it reads HVLVIDDDVA…EFLARIRVAL (115 aa). Asp-52 is modified (4-aspartylphosphate). The segment at residues 129–229 is a DNA-binding region (ompR/PhoB-type); that stretch reads RRSFYFADWT…ARGAGYFFDA (101 aa).

In terms of processing, phosphorylated by wide host range (WHR) VirA protein.

The protein localises to the cytoplasm. VirG is required for the positive regulation of at least two vir loci encoded by the Ri plasmid of A.rhizogenes. This is Regulatory protein VirG (virG) from Rhizobium rhizogenes (Agrobacterium rhizogenes).